We begin with the raw amino-acid sequence, 108 residues long: MADKYNVFDQLGELENTLNTTLTQISGIRQVLESSMTENATLRMELEKLRDRLAEFEKKEVKKETPKDQPNPNLIQIFNEGFHVCHLHYAERLAEGESCLDCLELLYR.

Zn(2+) is bound by residues His83, Cys85, Cys99, and Cys102.

It belongs to the YabA family. In terms of assembly, homotetramer. Interacts with both DnaA and DnaN, acting as a bridge between these two proteins. Zn(2+) is required as a cofactor.

Its subcellular location is the cytoplasm. It is found in the nucleoid. Functionally, involved in control of chromosome replication initiation. Inhibits the cooperative binding of DnaA to the oriC region, thus negatively regulating initiation of chromosome replication. Inhibits the ability of DnaA-ATP to form a helix on DNA; does not disassemble preformed DnaA-DNA helices. Decreases the residence time of DnaA on the chromosome at its binding sites (oriC, replication forks and promoter-binding sites). Tethers DnaA to the replication machinery via the DNA polymerase beta sliding clamp subunit (dnaN). Associates with oriC and other DnaA targets on the chromosome in a DnaA-dependent manner. This Lactococcus lactis subsp. lactis (strain IL1403) (Streptococcus lactis) protein is Replication initiation control protein YabA.